Reading from the N-terminus, the 378-residue chain is Poly(3-hydroxyalkanoate) polymerase subunit PhaC (378 aa).

Positions 84-356 (PVLIVYALVN…QSFPVGHIGM (273 aa)) constitute an AB hydrolase-1 domain.

It belongs to the PHA/PHB synthase family. Type III PhaC subfamily. As to quaternary structure, forms a heterodimer with PhaE, which may multimerize in the presence of 3-hydroxybutyryl-CoA. Both subunits are required for PHB synthesis in E.coli and in PHA-negative A.eutrophus.

It localises to the cytoplasm. It catalyses the reaction (3R)-3-hydroxybutanoyl-CoA + [(3R)-hydroxybutanoate](n) = [(3R)-hydroxybutanoate](n+1) + CoA. It functions in the pathway biopolymer metabolism; poly-(R)-3-hydroxybutanoate biosynthesis. When expressed in E.coli with Synechocystis PhaE and C.necator PhaA and PhaB, confers the ability to synthesize up to 13% (w/w) poly(3-hydroxybutyrate) (PHB) depending on the carbon source; all 4 genes are necessary for PHB production. Cell-free in vitro coexpression with PhaE gives a heterodimer able to polymerize 3-hydroxybutyrate-CoA. This chain is Poly(3-hydroxyalkanoate) polymerase subunit PhaC, found in Synechocystis sp. (strain ATCC 27184 / PCC 6803 / Kazusa).